Consider the following 266-residue polypeptide: Ribosomal RNA small subunit methyltransferase A (266 aa).

Residues His-13, Leu-15, Gly-40, Glu-61, Asp-85, and Asn-104 each contribute to the S-adenosyl-L-methionine site.

The protein belongs to the class I-like SAM-binding methyltransferase superfamily. rRNA adenine N(6)-methyltransferase family. RsmA subfamily.

The protein localises to the cytoplasm. It carries out the reaction adenosine(1518)/adenosine(1519) in 16S rRNA + 4 S-adenosyl-L-methionine = N(6)-dimethyladenosine(1518)/N(6)-dimethyladenosine(1519) in 16S rRNA + 4 S-adenosyl-L-homocysteine + 4 H(+). Its function is as follows. Specifically dimethylates two adjacent adenosines (A1518 and A1519) in the loop of a conserved hairpin near the 3'-end of 16S rRNA in the 30S particle. May play a critical role in biogenesis of 30S subunits. In Parabacteroides distasonis (strain ATCC 8503 / DSM 20701 / CIP 104284 / JCM 5825 / NCTC 11152), this protein is Ribosomal RNA small subunit methyltransferase A.